The chain runs to 135 residues: Small ribosomal subunit protein uS9 (135 aa).

It belongs to the universal ribosomal protein uS9 family.

The chain is Small ribosomal subunit protein uS9 from Petrotoga mobilis (strain DSM 10674 / SJ95).